The sequence spans 389 residues: Glutamate 5-kinase (389 aa).

Lys-16 is a binding site for ATP. The substrate site is built by Ser-56, Asp-143, and Asn-155. 175 to 176 contributes to the ATP binding site; it reads SD. One can recognise a PUA domain in the interval 281–358; it reads AGELHVDDGA…AEIEAILGYA (78 aa).

Belongs to the glutamate 5-kinase family.

It localises to the cytoplasm. It carries out the reaction L-glutamate + ATP = L-glutamyl 5-phosphate + ADP. It participates in amino-acid biosynthesis; L-proline biosynthesis; L-glutamate 5-semialdehyde from L-glutamate: step 1/2. Its function is as follows. Catalyzes the transfer of a phosphate group to glutamate to form L-glutamate 5-phosphate. The sequence is that of Glutamate 5-kinase from Rhizobium etli (strain CIAT 652).